Consider the following 520-residue polypeptide: Amine oxidase [flavin-containing] B (520 aa).

Position 2 is an N-acetylserine (Ser-2). The Cytoplasmic portion of the chain corresponds to 2 to 489; it reads SSKCDVVVVG…TFLQRHLPSV (488 aa). At Lys-52 the chain carries N6-acetyllysine. The residue at position 397 (Cys-397) is an S-8alpha-FAD cysteine. Residues 490–516 form a helical; Anchor for type IV membrane protein membrane-spanning segment; that stretch reads PGLLKLIGLTTIFSATALGFLAHKRGL. Residues 517–520 lie on the Mitochondrial intermembrane side of the membrane; it reads LVRI.

Monomer, homo- or heterodimer (containing two subunits of similar size). Each subunit contains a covalently bound flavin. Enzymatically active as monomer. FAD is required as a cofactor.

It localises to the mitochondrion outer membrane. It catalyses the reaction a secondary aliphatic amine + O2 + H2O = a primary amine + an aldehyde + H2O2. It carries out the reaction a primary methyl amine + O2 + H2O = an aldehyde + H2O2 + NH4(+). The enzyme catalyses benzylamine + O2 + H2O = benzaldehyde + H2O2 + NH4(+). The catalysed reaction is (R)-adrenaline + O2 + H2O = (R)-3,4-dihydroxymandelaldehyde + methylamine + H2O2. It catalyses the reaction dopamine + O2 + H2O = 3,4-dihydroxyphenylacetaldehyde + H2O2 + NH4(+). It carries out the reaction tyramine + O2 + H2O = (4-hydroxyphenyl)acetaldehyde + H2O2 + NH4(+). The enzyme catalyses (R)-noradrenaline + O2 + H2O = (R)-3,4-dihydroxymandelaldehyde + H2O2 + NH4(+). The catalysed reaction is 2-phenylethylamine + O2 + H2O = 2-phenylacetaldehyde + H2O2 + NH4(+). It catalyses the reaction N-acetylputrescine + O2 + H2O = 4-acetamidobutanal + H2O2 + NH4(+). Its function is as follows. Catalyzes the oxidative deamination of primary and some secondary amines such as neurotransmitters, and exogenous amines including the tertiary amine, neurotoxin 1-methyl-4-phenyl-1,2,3,6-tetrahydropyridine (MPTP), with concomitant reduction of oxygen to hydrogen peroxide and participates in the metabolism of neuroactive and vasoactive amines in the central nervous system and peripheral tissues. Preferentially degrades benzylamine and phenylethylamine. The protein is Amine oxidase [flavin-containing] B of Bos taurus (Bovine).